The following is a 441-amino-acid chain: Ribosomal protein uS12 methylthiotransferase RimO (441 aa).

One can recognise an MTTase N-terminal domain in the interval 8 to 118; that stretch reads PKIGFVSLGC…VLQHVHHYVP (111 aa). [4Fe-4S] cluster is bound by residues C17, C53, C82, C150, C154, and C157. Residues 136-373 form the Radical SAM core domain; that stretch reads LTPRHYAYLK…MQLQQQISAE (238 aa). The TRAM domain occupies 376–441; it reads QEKVGREILV…DEYDLWGSRV (66 aa).

This sequence belongs to the methylthiotransferase family. RimO subfamily. [4Fe-4S] cluster serves as cofactor.

It localises to the cytoplasm. It carries out the reaction L-aspartate(89)-[ribosomal protein uS12]-hydrogen + (sulfur carrier)-SH + AH2 + 2 S-adenosyl-L-methionine = 3-methylsulfanyl-L-aspartate(89)-[ribosomal protein uS12]-hydrogen + (sulfur carrier)-H + 5'-deoxyadenosine + L-methionine + A + S-adenosyl-L-homocysteine + 2 H(+). Its function is as follows. Catalyzes the methylthiolation of an aspartic acid residue of ribosomal protein uS12. In Salmonella paratyphi B (strain ATCC BAA-1250 / SPB7), this protein is Ribosomal protein uS12 methylthiotransferase RimO.